Here is a 319-residue protein sequence, read N- to C-terminus: L-lactate dehydrogenase (319 aa).

Residues 10–11, Asp-32, Arg-37, Tyr-62, and 76–77 contribute to the NAD(+) site; these read RV and GV. Substrate is bound by residues Gln-79, Arg-85, and 117–120; that span reads NPVD. NAD(+)-binding positions include 115–117 and Ser-140; that span reads VTN. Residue 145–148 coordinates substrate; it reads DTAR. Residues Arg-150 and His-165 each contribute to the beta-D-fructose 1,6-bisphosphate site. Residue His-172 is the Proton acceptor of the active site. Tyr-217 bears the Phosphotyrosine mark. Substrate is bound at residue Thr-226.

The protein belongs to the LDH/MDH superfamily. LDH family. As to quaternary structure, homotetramer.

It is found in the cytoplasm. It carries out the reaction (S)-lactate + NAD(+) = pyruvate + NADH + H(+). The protein operates within fermentation; pyruvate fermentation to lactate; (S)-lactate from pyruvate: step 1/1. Allosterically activated by fructose 1,6-bisphosphate (FBP). Inactivated by Mn(2+), Co(2+), Cd(2+) and Zn(2+). Its function is as follows. Catalyzes the conversion of lactate to pyruvate. It is stereospecific for L(+)-lactate. The sequence is that of L-lactate dehydrogenase from Thermotoga maritima (strain ATCC 43589 / DSM 3109 / JCM 10099 / NBRC 100826 / MSB8).